A 123-amino-acid polypeptide reads, in one-letter code: Small ribosomal subunit protein uS12 (123 aa).

A disordered region spans residues 1-28 (MPTIQQLIRTERSKVQKKTKSPALKQCP). Residue aspartate 89 is modified to 3-methylthioaspartic acid. Residues 104 to 123 (ATGVKDRKQGRSKYGTKRPK) form a disordered region. Positions 113-123 (GRSKYGTKRPK) are enriched in basic residues.

The protein belongs to the universal ribosomal protein uS12 family. As to quaternary structure, part of the 30S ribosomal subunit. Contacts proteins S8 and S17. May interact with IF1 in the 30S initiation complex.

Functionally, with S4 and S5 plays an important role in translational accuracy. Its function is as follows. Interacts with and stabilizes bases of the 16S rRNA that are involved in tRNA selection in the A site and with the mRNA backbone. Located at the interface of the 30S and 50S subunits, it traverses the body of the 30S subunit contacting proteins on the other side and probably holding the rRNA structure together. The combined cluster of proteins S8, S12 and S17 appears to hold together the shoulder and platform of the 30S subunit. The protein is Small ribosomal subunit protein uS12 of Gloeothece citriformis (strain PCC 7424) (Cyanothece sp. (strain PCC 7424)).